The following is a 184-amino-acid chain: Photosystem I assembly protein Ycf4 (184 aa).

Helical transmembrane passes span 22–42 (FCWACILLLGSLGFLLVGISS) and 64–84 (IVMSFYGIAGLFISSYLWSTI).

It belongs to the Ycf4 family.

It localises to the plastid. The protein resides in the chloroplast thylakoid membrane. Seems to be required for the assembly of the photosystem I complex. The sequence is that of Photosystem I assembly protein Ycf4 from Piper cenocladum (Ant piper).